A 196-amino-acid polypeptide reads, in one-letter code: Peptide deformylase (196 aa).

2 residues coordinate Fe cation: cysteine 105 and histidine 147. Residue glutamate 148 is part of the active site. Histidine 151 is a Fe cation binding site.

The protein belongs to the polypeptide deformylase family. Requires Fe(2+) as cofactor.

It carries out the reaction N-terminal N-formyl-L-methionyl-[peptide] + H2O = N-terminal L-methionyl-[peptide] + formate. Removes the formyl group from the N-terminal Met of newly synthesized proteins. Requires at least a dipeptide for an efficient rate of reaction. N-terminal L-methionine is a prerequisite for activity but the enzyme has broad specificity at other positions. The sequence is that of Peptide deformylase from Flavobacterium johnsoniae (strain ATCC 17061 / DSM 2064 / JCM 8514 / BCRC 14874 / CCUG 350202 / NBRC 14942 / NCIMB 11054 / UW101) (Cytophaga johnsonae).